We begin with the raw amino-acid sequence, 846 residues long: MELEPTLFGIIEALAPQLLSQSHLQTFVSDVVNLLRSSTKSATQLGPLIDFYKLQSLDSPETTIMWHKIEKFLDALFGIQNTDDMVKYLSVFQSLLPSNYRAKIVQKSSGLNMENLANHEHLLSPVRAPSIYTEASFENMDRFSERRSMVSSPNRYVPSSTYSSVTLRQLSNPYYVNTIPEEDILKYVSYTLLATTSALFPFDHEQIQIPSKIPNFESGLLHLIFEAGLLYQSLGYKVEKFRMLNISPMKKALIIEISEELQNYTAFVNNLVSSGTVVSLKSLYREIYENIIRLRIYCRFTEHLEELSGDTFLIELNIFKSHGDLTIRKIATNLFNSMISLYYEYLMNWLTKGLLRATYGEFFIAENTDTNGTDDDFIYHIPIEFNQERVPAFIPKELAYKIFMIGKSYIFLEKYCKEVQWTNEFSKKYHVLYQSNSYRGISTNFFEIINDQYSEIVNHTNQILNQKFHYRDVVFALKNILLMGKSDFMDALIEKANDILATPSDSLPNYKLTRVLQEAVQLSSLRHLMNSPRNSSVINGLDARVLDLGHGSVGWDVFTLDYILYPPLSLVLNVNRPFGRKEYLRIFNFLWRFKKNNYFYQKEMLKSNDIIRSFKKIRGYNPLIRDIINKLSRISILRTQFQQFNSKMESYYLNCIIEENFKEMTRKLQRTENKSQNQFDLIRLNNGTIELNGILTPKAEVLTKSSSSKPQKHAIEKTLNIDELESVHNTFLTNILSHKLFATNTSEISVGDYSGQPYPTSLVLLLNSVYEFVKVYCNLNDIGYEIFIKMNLNDHEASNGLLGKFNTNLKEIVSQYKNFKDRLYIFRADLKNDGDEELFLLSKSLR.

2 positions are modified to phosphoserine: serine 124 and serine 136.

It belongs to the TUBGCP family. Interacts with TUB4, SPC72 and SPC97.

The protein resides in the nucleus. The protein localises to the cytoplasm. It localises to the cytoskeleton. It is found in the microtubule organizing center. Its subcellular location is the spindle pole body. Its function is as follows. Involved in microtubule organization by the microtubule organizing center, the spindle pole body (SPB). Probably part of the microtubule attachment site at the SPB. This is Spindle pole body component SPC98 (SPC98) from Saccharomyces cerevisiae (strain ATCC 204508 / S288c) (Baker's yeast).